We begin with the raw amino-acid sequence, 212 residues long: Ribonuclease HII (212 aa).

The RNase H type-2 domain maps to 17-211; the sequence is ANLAGIDEAG…VIEALLSLEQ (195 aa). A divalent metal cation contacts are provided by aspartate 23, glutamate 24, and aspartate 120.

This sequence belongs to the RNase HII family. The cofactor is Mn(2+). Requires Mg(2+) as cofactor.

Its subcellular location is the cytoplasm. The enzyme catalyses Endonucleolytic cleavage to 5'-phosphomonoester.. Endonuclease that specifically degrades the RNA of RNA-DNA hybrids. This chain is Ribonuclease HII, found in Chloroflexus aurantiacus (strain ATCC 29364 / DSM 637 / Y-400-fl).